Here is a 174-residue protein sequence, read N- to C-terminus: Ribosome maturation factor RimM (174 aa).

The region spanning 91–164 (DDAWYPHQLQ…KVVLSPPGGL (74 aa)) is the PRC barrel domain.

The protein belongs to the RimM family. As to quaternary structure, binds ribosomal protein uS19.

It is found in the cytoplasm. Functionally, an accessory protein needed during the final step in the assembly of 30S ribosomal subunit, possibly for assembly of the head region. Essential for efficient processing of 16S rRNA. May be needed both before and after RbfA during the maturation of 16S rRNA. It has affinity for free ribosomal 30S subunits but not for 70S ribosomes. In Kineococcus radiotolerans (strain ATCC BAA-149 / DSM 14245 / SRS30216), this protein is Ribosome maturation factor RimM.